The following is a 1041-amino-acid chain: Integrator complex subunit 3 (1041 aa).

M1 is subject to N-acetylmethionine. 3 positions are modified to phosphoserine: S500, S535, and S993. Residues 975 to 1041 (YEDSSTKPPK…GSSAVGSDSD (67 aa)) are disordered. The span at 1006-1020 (AEEESGSSSASEEED) shows a compositional bias: acidic residues.

The protein belongs to the Integrator subunit 3 family. As to quaternary structure, component of the Integrator complex, composed of core subunits INTS1, INTS2, INTS3, INTS4, INTS5, INTS6, INTS7, INTS8, INTS9/RC74, INTS10, INTS11/CPSF3L, INTS12, INTS13, INTS14 and INTS15. The core complex associates with protein phosphatase 2A subunits PPP2CA and PPP2R1A, to form the Integrator-PP2A (INTAC) complex. Component of the SOSS complex, composed of SOSS-B (SOSS-B1/NABP2 or SOSS-B2/NABP1), SOSS-A/INTS3 and SOSS-C/INIP. SOSS complexes containing SOSS-B1/NABP2 are more abundant than complexes containing SOSS-B2/NABP1. Interacts with SOSS-B1/NABP2, SOSS-B2/NABP1 and SOSS-C/INIP; the interaction is direct. Interacts with NBN/NBS1.

The protein localises to the nucleus. It localises to the cytoplasm. Functionally, component of the integrator complex, a multiprotein complex that terminates RNA polymerase II (Pol II) transcription in the promoter-proximal region of genes. The integrator complex provides a quality checkpoint during transcription elongation by driving premature transcription termination of transcripts that are unfavorably configured for transcriptional elongation: the complex terminates transcription by (1) catalyzing dephosphorylation of the C-terminal domain (CTD) of Pol II subunit POLR2A/RPB1 and SUPT5H/SPT5, (2) degrading the exiting nascent RNA transcript via endonuclease activity and (3) promoting the release of Pol II from bound DNA. The integrator complex is also involved in terminating the synthesis of non-coding Pol II transcripts, such as enhancer RNAs (eRNAs), small nuclear RNAs (snRNAs), telomerase RNAs and long non-coding RNAs (lncRNAs). Within the integrator complex, INTS3 is involved in the post-termination step: INTS3 binds INTS7 in the open conformation of integrator complex and prevents the rebinding of Pol II to the integrator after termination cycle. Mediates recruitment of cytoplasmic dynein to the nuclear envelope, probably as component of the integrator complex. Component of the SOSS complex, a multiprotein complex that functions downstream of the MRN complex to promote DNA repair and G2/M checkpoint. The SOSS complex associates with single-stranded DNA at DNA lesions and influences diverse endpoints in the cellular DNA damage response including cell-cycle checkpoint activation, recombinational repair and maintenance of genomic stability. The SOSS complex is required for efficient homologous recombination-dependent repair of double-strand breaks (DSBs) and ATM-dependent signaling pathways. In the SOSS complex, it is required for the assembly of the complex and for stabilization of the complex at DNA damage sites. The protein is Integrator complex subunit 3 (Ints3) of Mus musculus (Mouse).